The chain runs to 224 residues: Large ribosomal subunit protein uL4 (224 aa).

Residues 52–109 (AAARQGTHSTKTRGDVSGGGRKPYRQKGTGRARQGSTRTPQFTGGGVVHGPKPRDYSQ) form a disordered region.

Belongs to the universal ribosomal protein uL4 family. Part of the 50S ribosomal subunit.

In terms of biological role, one of the primary rRNA binding proteins, this protein initially binds near the 5'-end of the 23S rRNA. It is important during the early stages of 50S assembly. It makes multiple contacts with different domains of the 23S rRNA in the assembled 50S subunit and ribosome. Its function is as follows. Forms part of the polypeptide exit tunnel. This is Large ribosomal subunit protein uL4 from Mycobacterium ulcerans (strain Agy99).